A 294-amino-acid chain; its full sequence is rRNA 2'-O-methyltransferase fibrillarin (294 aa).

Residues 1–62 (MGKDFKSGGG…GKFGAKGPRG (62 aa)) are disordered. Gly residues predominate over residues 20–56 (GPGGPGGRPFNKGPGGPGGPGGKFGGGRPGGPGGKFG). Arginine 27, arginine 47, and arginine 61 each carry asymmetric dimethylarginine. S-adenosyl-L-methionine-binding positions include 151–152 (TT), 170–171 (EF), 195–196 (DA), and 215–218 (DVAQ).

Belongs to the methyltransferase superfamily. Fibrillarin family. In terms of assembly, component of box C/D small nucleolar ribonucleoprotein (snoRNP) particles. It is associated with the U3, U8 and U13 small nuclear RNAs. Post-translationally, by homology to other fibrillarins, some or all of the N-terminal domain arginines are modified to asymmetric dimethylarginine (DMA).

It localises to the nucleus. The protein resides in the nucleolus. It catalyses the reaction L-glutaminyl-[histone H2A] + S-adenosyl-L-methionine = N(5)-methyl-L-glutaminyl-[histone H2A] + S-adenosyl-L-homocysteine + H(+). In terms of biological role, S-adenosyl-L-methionine-dependent methyltransferase that has the ability to methylate both RNAs and proteins. Involved in pre-rRNA processing. Utilizes the methyl donor S-adenosyl-L-methionine to catalyze the site-specific 2'-hydroxyl methylation of ribose moieties in pre-ribosomal RNA. Site specificity is provided by a guide RNA that base pairs with the substrate. Methylation occurs at a characteristic distance from the sequence involved in base pairing with the guide RNA. Also acts as a protein methyltransferase by mediating methylation of 'Gln-105' of histone H2A (H2AQ105me), a modification that impairs binding of the FACT complex and is specifically present at 35S ribosomal DNA locus. This Tetrahymena thermophila protein is rRNA 2'-O-methyltransferase fibrillarin (FIB).